The primary structure comprises 396 residues: 1-deoxy-D-xylulose 5-phosphate reductoisomerase (396 aa).

NADPH contacts are provided by Thr10, Gly11, Ser12, Ile13, Asn38, and Asn123. Lys124 lines the 1-deoxy-D-xylulose 5-phosphate pocket. Glu125 is a binding site for NADPH. Asp149 contributes to the Mn(2+) binding site. Ser150, Glu151, Ser185, and His208 together coordinate 1-deoxy-D-xylulose 5-phosphate. Glu151 contributes to the Mn(2+) binding site. Gly214 is a binding site for NADPH. 1-deoxy-D-xylulose 5-phosphate is bound by residues Ser221, Asn226, Lys227, and Glu230. Glu230 contributes to the Mn(2+) binding site.

It belongs to the DXR family. It depends on Mg(2+) as a cofactor. The cofactor is Mn(2+).

The catalysed reaction is 2-C-methyl-D-erythritol 4-phosphate + NADP(+) = 1-deoxy-D-xylulose 5-phosphate + NADPH + H(+). It participates in isoprenoid biosynthesis; isopentenyl diphosphate biosynthesis via DXP pathway; isopentenyl diphosphate from 1-deoxy-D-xylulose 5-phosphate: step 1/6. In terms of biological role, catalyzes the NADPH-dependent rearrangement and reduction of 1-deoxy-D-xylulose-5-phosphate (DXP) to 2-C-methyl-D-erythritol 4-phosphate (MEP). In Shewanella pealeana (strain ATCC 700345 / ANG-SQ1), this protein is 1-deoxy-D-xylulose 5-phosphate reductoisomerase.